Consider the following 1057-residue polypeptide: Structural maintenance of chromosomes protein 6B (1057 aa).

Residues 22 to 1047 form the Zinc-hook domain; it reads ILRIKVENFM…ISMVKSHERI (1026 aa). Position 49–56 (49–56) interacts with ATP; that stretch reads GQNGSGKS. A coiled-coil region spans residues 135-448; sequence KVSNKRDELR…NDLKKHQTNK (314 aa). The tract at residues 449 to 632 is flexible hinge; it reads VTAFGGDRVI…PPLSRRPSRL (184 aa). Residues 633–904 adopt a coiled-coil conformation; it reads CASFDDQIKD…QDHREKLMAC (272 aa). Over residues 818 to 828 the composition is skewed to basic and acidic residues; it reads KNKRKESDQKA. Residues 818-845 are disordered; the sequence is KNKRKESDQKASEICPESEIESLGPWDG.

It belongs to the SMC family. SMC6 subfamily. In terms of assembly, forms a heterodimer with SMC5. The SMC5-SMC6 complex is composed of the SMC5 and SMC6 heterodimer attached via their hinge domain and from the non-SMC subunit NSE4A or NSE4B. In terms of tissue distribution, expressed in seedlings, rosette leaves and floral buds.

It is found in the nucleus. Its subcellular location is the chromosome. Its function is as follows. Core component of the SMC5-SMC6 complex that promotes sister chromatid alignment after DNA damage and facilitates double-stranded DNA breaks (DSBs) repair via homologous recombination between sister chromatids. This chain is Structural maintenance of chromosomes protein 6B (SMC6B), found in Arabidopsis thaliana (Mouse-ear cress).